We begin with the raw amino-acid sequence, 392 residues long: Probable glycerol-3-phosphate dehydrogenase 2 (392 aa).

Residues 42 to 47 (GSGNWG), phenylalanine 130, lysine 153, and alanine 196 contribute to the NAD(+) site. Lysine 153 serves as a coordination point for substrate. Lysine 248 serves as the catalytic Proton acceptor. 2 residues coordinate NAD(+): arginine 312 and glutamine 341. 312-313 (RN) serves as a coordination point for substrate.

This sequence belongs to the NAD-dependent glycerol-3-phosphate dehydrogenase family. As to quaternary structure, homodimer.

It localises to the cytoplasm. The catalysed reaction is sn-glycerol 3-phosphate + NAD(+) = dihydroxyacetone phosphate + NADH + H(+). This chain is Probable glycerol-3-phosphate dehydrogenase 2 (gpdh-2), found in Caenorhabditis elegans.